We begin with the raw amino-acid sequence, 94 residues long: Progonadoliberin-3 (94 aa).

An N-terminal signal peptide occupies residues 1–23; the sequence is MEWKGRVLVQLLMLVCVLEVSLC. A Pyrrolidone carboxylic acid modification is found at Gln24. Gly33 is subject to Glycine amide.

It belongs to the GnRH family.

The protein localises to the secreted. In terms of biological role, stimulates the secretion of gonadotropins. The chain is Progonadoliberin-3 (gnrh3) from Rutilus rutilus (Roach).